We begin with the raw amino-acid sequence, 3640 residues long: Serine/threonine-protein kinase SMG1 (3640 aa).

A compositionally biased stretch (polar residues) spans 21–34; that stretch reads NDWQPRSDSLSASQ. Residues 21-41 are disordered; the sequence is NDWQPRSDSLSASQDGVKCSV. Positions 1495-1843 constitute an FAT domain; sequence YCHSGKCELA…LYPAIVGSIS (349 aa). An HEAT repeat occupies 1794–1829; that stretch reads APWRGIIPQLFSRLNHPEAYIRQSICSLLCRVAQDS. Residues 1870 to 1890 form a disordered region; it reads GLCGGESETGSGPTSQESSRG. A compositionally biased stretch (low complexity) spans 1874–1887; that stretch reads GESETGSGPTSQES. The 340-residue stretch at 2102 to 2441 folds into the PI3K/PI4K catalytic domain; it reads VGNTITILPT…MERDITRSLF (340 aa). Residues 2108–2114 are G-loop; it reads ILPTKTK. Positions 2310-2318 are catalytic loop; it reads GLGDRHLDN. The tract at residues 2330–2354 is activation loop; that stretch reads HIDYNVCFEKGKSLRVPEKVPFRMT. One can recognise an FATC domain in the interval 3608–3640; sequence RRMSVTEQVDYVIKEATNVDNLAQLYEGWTAWV.

Belongs to the PI3/PI4-kinase family. The cofactor is Mn(2+). Autophosphorylated.

The protein localises to the nucleus. It localises to the cytoplasm. The enzyme catalyses L-seryl-[protein] + ATP = O-phospho-L-seryl-[protein] + ADP + H(+). The catalysed reaction is L-threonyl-[protein] + ATP = O-phospho-L-threonyl-[protein] + ADP + H(+). Serine/threonine protein kinase involved in both mRNA surveillance and genotoxic stress response pathways. Recognizes the substrate consensus sequence [ST]-Q. Plays a central role in nonsense-mediated decay (NMD) of mRNAs containing premature stop codons by phosphorylating UPF1/RENT1. This chain is Serine/threonine-protein kinase SMG1, found in Danio rerio (Zebrafish).